Reading from the N-terminus, the 495-residue chain is MRINPTTSSSAVSTLEEKNLGRIAQIIGPVLDVVFPPGKMPNIYNALVVKGRDTVGQQINVICEVQQLLGNNRVRAVAMSATDGLTRGMEVIDTGAALSVPVGGATLGRIFNVLGEPVDNLGPVDTRTTSPIHRSAPAFIQLDTKLSIFETGIKVVDLLAPYRRGGKIGLFGGAGVGKTVLIMELINNIAKAHGGVSVFGGVGERTREGNDLYMEMKESGVINEKNIAESKVALVYGQMNEPPGARMRVGLTALTMAEYFRDVNEQDVLLFIDNIFRFVQAGSEVSALLGRMPSAVGYQPTLSTEMGSLQERITSTKEGSITSIQAVYVPADDLTDPAPATTFAHLDATTVLSRGLAAKGIYPAVDPLDSTSTMLQPRIVGEEHYETAQKVKQTLQRYKELQDIIAILGLDELSEEDRLTVARARKIERFLSQPFFVAEVFTGSPGKYVGLAETIRGFQLILSGELDSLPEQAFYLVGNIDEATAKAMNLEGEKK.

Gly-172–Thr-179 lines the ATP pocket.

This sequence belongs to the ATPase alpha/beta chains family. As to quaternary structure, F-type ATPases have 2 components, CF(1) - the catalytic core - and CF(0) - the membrane proton channel. CF(1) has five subunits: alpha(3), beta(3), gamma(1), delta(1), epsilon(1). CF(0) has four main subunits: a(1), b(1), b'(1) and c(9-12).

It is found in the plastid. It localises to the chloroplast thylakoid membrane. It catalyses the reaction ATP + H2O + 4 H(+)(in) = ADP + phosphate + 5 H(+)(out). Functionally, produces ATP from ADP in the presence of a proton gradient across the membrane. The catalytic sites are hosted primarily by the beta subunits. This Brimeura amethystina (Spanish hyacinth) protein is ATP synthase subunit beta, chloroplastic.